Here is a 539-residue protein sequence, read N- to C-terminus: RING finger protein 37 (539 aa).

Residues 226 to 249 (PALPMESDCDPGGQSESQHSPCTL) are disordered. Over residues 239 to 249 (QSESQHSPCTL) the composition is skewed to polar residues. The region spanning 258–338 (DVPEEFLDPI…DRFLLQHSIS (81 aa)) is the U-box domain. 2 disordered regions span residues 359–399 (LPSR…EPTA) and 456–479 (GTRGSSACRRPASSSEHPRSVSGP). Residues 374-395 (HYSLGMSASSSATSPLFSPTTS) are compositionally biased toward low complexity. The RING-type zinc finger occupies 481–526 (CASCKQAFSSYSTNEPVYQLPCGHLLCRPCLSEKQRSQPMMCTACR).

In terms of assembly, interacts with UBE2L3. Interacts with VCP. As to expression, expressed in testis and placenta.

It localises to the nucleus. It catalyses the reaction S-ubiquitinyl-[E2 ubiquitin-conjugating enzyme]-L-cysteine + [acceptor protein]-L-lysine = [E2 ubiquitin-conjugating enzyme]-L-cysteine + N(6)-ubiquitinyl-[acceptor protein]-L-lysine.. It participates in protein modification; protein ubiquitination. In terms of biological role, may have a ubiquitin-protein ligase activity acting as an E3 ubiquitin-protein ligase or as a ubiquitin-ubiquitin ligase promoting elongation of ubiquitin chains on substrates. The protein is RING finger protein 37 (Ubox5) of Mus musculus (Mouse).